The sequence spans 420 residues: ATP phosphoribosyltransferase regulatory subunit (420 aa).

It belongs to the class-II aminoacyl-tRNA synthetase family. HisZ subfamily. Heteromultimer composed of HisG and HisZ subunits.

It is found in the cytoplasm. Its pathway is amino-acid biosynthesis; L-histidine biosynthesis; L-histidine from 5-phospho-alpha-D-ribose 1-diphosphate: step 1/9. Its function is as follows. Required for the first step of histidine biosynthesis. May allow the feedback regulation of ATP phosphoribosyltransferase activity by histidine. The sequence is that of ATP phosphoribosyltransferase regulatory subunit from Synechococcus sp. (strain ATCC 27144 / PCC 6301 / SAUG 1402/1) (Anacystis nidulans).